The chain runs to 537 residues: Phosphoenolpyruvate carboxykinase (ATP) (537 aa).

Residues arginine 61, tyrosine 195, and lysine 201 each contribute to the substrate site. ATP-binding positions include lysine 201, histidine 220, and 236-244 (GLSGTGKTT). Lysine 201 and histidine 220 together coordinate Mn(2+). Aspartate 257 serves as a coordination point for Mn(2+). Glutamate 285 lines the ATP pocket. Positions 311-321 (PDFDNGSKTEN) are enriched in basic and acidic residues. The segment at 311–342 (PDFDNGSKTENTRSAYPLESIPNASPTGRAGQ) is disordered. A substrate-binding site is contributed by arginine 323. Residues arginine 323 and threonine 448 each contribute to the ATP site.

It belongs to the phosphoenolpyruvate carboxykinase (ATP) family. Requires Mn(2+) as cofactor.

It is found in the cytoplasm. The enzyme catalyses oxaloacetate + ATP = phosphoenolpyruvate + ADP + CO2. It participates in carbohydrate biosynthesis; gluconeogenesis. Involved in the gluconeogenesis. Catalyzes the conversion of oxaloacetate (OAA) to phosphoenolpyruvate (PEP) through direct phosphoryl transfer between the nucleoside triphosphate and OAA. In Rhodopseudomonas palustris (strain BisB5), this protein is Phosphoenolpyruvate carboxykinase (ATP).